A 212-amino-acid chain; its full sequence is Nitrogen regulatory protein P-II homolog (212 aa).

3 stretches are compositionally biased toward low complexity: residues 1–12, 32–46, and 63–74; these read MSSPATAAAAAA, TTTTTSRLLLASRSR, and PPTAARAQSAAA. Residues 1–68 constitute a chloroplast transit peptide; sequence MSSPATAAAA…PRRLPPTAAR (68 aa). A disordered region spans residues 1-74; it reads MSSPATAAAA…TAARAQSAAA (74 aa). ATP contacts are provided by residues 117-121 and 170-173; these read GFGAQ and GDGK. Glycine 119 contributes to the Mg(2+) binding site.

This sequence belongs to the P(II) protein family. In terms of assembly, homodimer.

The protein localises to the plastid. It is found in the chloroplast. Participates in sensing carbon and organic nitrogen status and regulates some steps of primary carbon and nitrogen metabolism. This is Nitrogen regulatory protein P-II homolog (GLB) from Oryza sativa subsp. japonica (Rice).